Here is a 390-residue protein sequence, read N- to C-terminus: 2-oxoisovalerate dehydrogenase subunit beta, mitochondrial (390 aa).

Residues 1 to 48 (MAAVAARAGGLLWLRAAGAERRRCGLRCAALVQGFLQPGGEDTAQKRR) constitute a mitochondrion transit peptide. Residue tyrosine 150 participates in thiamine diphosphate binding. K(+) contacts are provided by glycine 176, leucine 178, threonine 179, cysteine 226, and aspartate 229. N6-acetyllysine is present on lysine 230. A K(+)-binding site is contributed by asparagine 231. At lysine 239 the chain carries N6-acetyllysine.

In terms of assembly, heterotetramer of 2 alpha/BCKDHA and 2 beta chains/BCKDHB that forms the branched-chain alpha-keto acid decarboxylase (E1) component of the BCKD complex. The branched-chain alpha-ketoacid dehydrogenase is a large complex composed of three major building blocks E1, E2 and E3. It is organized around E2, a 24-meric cubic core composed of DBT, to which are associated 6 to 12 copies of E1, and approximately 6 copies of the dehydrogenase E3, a DLD dimer. It depends on thiamine diphosphate as a cofactor.

It is found in the mitochondrion matrix. It carries out the reaction N(6)-[(R)-lipoyl]-L-lysyl-[protein] + 3-methyl-2-oxobutanoate + H(+) = N(6)-[(R)-S(8)-2-methylpropanoyldihydrolipoyl]-L-lysyl-[protein] + CO2. In terms of biological role, together with BCKDHA forms the heterotetrameric E1 subunit of the mitochondrial branched-chain alpha-ketoacid dehydrogenase (BCKD) complex. The BCKD complex catalyzes the multi-step oxidative decarboxylation of alpha-ketoacids derived from the branched-chain amino-acids valine, leucine and isoleucine producing CO2 and acyl-CoA which is subsequently utilized to produce energy. The E1 subunit catalyzes the first step with the decarboxylation of the alpha-ketoacid forming an enzyme-product intermediate. A reductive acylation mediated by the lipoylamide cofactor of E2 extracts the acyl group from the E1 active site for the next step of the reaction. In Mus musculus (Mouse), this protein is 2-oxoisovalerate dehydrogenase subunit beta, mitochondrial.